The chain runs to 700 residues: Elongation factor G (700 aa).

Residues 13 to 288 (SKIRNIGITA…AVIDYLPAPD (276 aa)) form the tr-type G domain. Residues 22-29 (AHIDAGKT), 86-90 (DTPGH), and 140-143 (NKLD) contribute to the GTP site.

The protein belongs to the TRAFAC class translation factor GTPase superfamily. Classic translation factor GTPase family. EF-G/EF-2 subfamily.

The protein localises to the cytoplasm. Catalyzes the GTP-dependent ribosomal translocation step during translation elongation. During this step, the ribosome changes from the pre-translocational (PRE) to the post-translocational (POST) state as the newly formed A-site-bound peptidyl-tRNA and P-site-bound deacylated tRNA move to the P and E sites, respectively. Catalyzes the coordinated movement of the two tRNA molecules, the mRNA and conformational changes in the ribosome. This Gluconobacter oxydans (strain 621H) (Gluconobacter suboxydans) protein is Elongation factor G.